The following is a 2151-amino-acid chain: RNA-directed RNA polymerase L (2151 aa).

Mn(2+)-binding residues include His36, Glu54, Asp97, Glu110, and Val111. Lys124 acts as the For endonuclease activity in catalysis. Residues 956 to 1142 form the RdRp catalytic domain; the sequence is NGKFIRMKRK…SVNTEMWKSM (187 aa). Mg(2+) is bound at residue Asp1099.

The protein belongs to the Bunyavirales RNA polymerase family. As to quaternary structure, interacts with the viral nucleoprotein. Mn(2+) is required as a cofactor. Requires Mg(2+) as cofactor.

Its subcellular location is the host cytoplasm. The protein localises to the host perinuclear region. It carries out the reaction RNA(n) + a ribonucleoside 5'-triphosphate = RNA(n+1) + diphosphate. RNA-dependent RNA polymerase, which is responsible for the replication and transcription of the viral RNA genome using antigenomic RNA as an intermediate. During transcription, synthesizes subgenomic RNAs and assures their capping by a cap-snatching mechanism, which involves the endonuclease activity cleaving the host capped pre-mRNAs. These short capped RNAs are then used as primers for viral transcription. Cleaves ssRNA substrates but not DNA. Seems to downregulate the expression of its own and heterologous mRNAs through its endonuclease activity. The polypeptide is RNA-directed RNA polymerase L (Apodemus agrarius (Eurasian field mouse)).